The primary structure comprises 261 residues: MTHQTHSYHMVNPSPWPLTGALSALLMTSGLIMWFHFNSMILLTLGLSTNILTMYQWWRDIIRESTFQGHHTPTVQKGLRYGMILFIVSEVLFFTGFFWAFYHSSLAPTPELGGCWPPTGIHPLNPLEVPLLNTSVLLASGVSITWAHHSLMEGNRKHMLQALFITIALGLYFTLLQASEYYEAPFTISDGIYGSTFFVATGFHGLHVIIGSTFLIVCFLRQVKFHFTSNHHFGFERAAWYWHFVDVVWLFLYVSIYWWGS.

Residues 1-15 are Mitochondrial matrix-facing; that stretch reads MTHQTHSYHMVNPSP. The helical transmembrane segment at 16-34 threads the bilayer; the sequence is WPLTGALSALLMTSGLIMW. Topologically, residues 35–40 are mitochondrial intermembrane; the sequence is FHFNSM. The helical transmembrane segment at 41–66 threads the bilayer; sequence ILLTLGLSTNILTMYQWWRDIIREST. Over 67–72 the chain is Mitochondrial matrix; the sequence is FQGHHT. A helical transmembrane segment spans residues 73 to 105; the sequence is PTVQKGLRYGMILFIVSEVLFFTGFFWAFYHSS. Residues 106–128 are Mitochondrial intermembrane-facing; that stretch reads LAPTPELGGCWPPTGIHPLNPLE. A helical membrane pass occupies residues 129–152; it reads VPLLNTSVLLASGVSITWAHHSLM. Residues 153–155 are Mitochondrial matrix-facing; sequence EGN. The helical transmembrane segment at 156 to 183 threads the bilayer; that stretch reads RKHMLQALFITIALGLYFTLLQASEYYE. Residues 184-190 lie on the Mitochondrial intermembrane side of the membrane; sequence APFTISD. The chain crosses the membrane as a helical span at residues 191–223; sequence GIYGSTFFVATGFHGLHVIIGSTFLIVCFLRQV. Residues 224 to 232 lie on the Mitochondrial matrix side of the membrane; the sequence is KFHFTSNHH. A helical membrane pass occupies residues 233–256; that stretch reads FGFERAAWYWHFVDVVWLFLYVSI. Topologically, residues 257-261 are mitochondrial intermembrane; the sequence is YWWGS.

This sequence belongs to the cytochrome c oxidase subunit 3 family. In terms of assembly, component of the cytochrome c oxidase (complex IV, CIV), a multisubunit enzyme composed of 14 subunits. The complex is composed of a catalytic core of 3 subunits MT-CO1, MT-CO2 and MT-CO3, encoded in the mitochondrial DNA, and 11 supernumerary subunits COX4I, COX5A, COX5B, COX6A, COX6B, COX6C, COX7A, COX7B, COX7C, COX8 and NDUFA4, which are encoded in the nuclear genome. The complex exists as a monomer or a dimer and forms supercomplexes (SCs) in the inner mitochondrial membrane with NADH-ubiquinone oxidoreductase (complex I, CI) and ubiquinol-cytochrome c oxidoreductase (cytochrome b-c1 complex, complex III, CIII), resulting in different assemblies (supercomplex SCI(1)III(2)IV(1) and megacomplex MCI(2)III(2)IV(2)).

Its subcellular location is the mitochondrion inner membrane. The enzyme catalyses 4 Fe(II)-[cytochrome c] + O2 + 8 H(+)(in) = 4 Fe(III)-[cytochrome c] + 2 H2O + 4 H(+)(out). In terms of biological role, component of the cytochrome c oxidase, the last enzyme in the mitochondrial electron transport chain which drives oxidative phosphorylation. The respiratory chain contains 3 multisubunit complexes succinate dehydrogenase (complex II, CII), ubiquinol-cytochrome c oxidoreductase (cytochrome b-c1 complex, complex III, CIII) and cytochrome c oxidase (complex IV, CIV), that cooperate to transfer electrons derived from NADH and succinate to molecular oxygen, creating an electrochemical gradient over the inner membrane that drives transmembrane transport and the ATP synthase. Cytochrome c oxidase is the component of the respiratory chain that catalyzes the reduction of oxygen to water. Electrons originating from reduced cytochrome c in the intermembrane space (IMS) are transferred via the dinuclear copper A center (CU(A)) of subunit 2 and heme A of subunit 1 to the active site in subunit 1, a binuclear center (BNC) formed by heme A3 and copper B (CU(B)). The BNC reduces molecular oxygen to 2 water molecules using 4 electrons from cytochrome c in the IMS and 4 protons from the mitochondrial matrix. The polypeptide is Cytochrome c oxidase subunit 3 (MT-CO3) (Balaenoptera musculus (Blue whale)).